Reading from the N-terminus, the 544-residue chain is MTPSELKRLYHITKVQLEYGLDELLPEHALTQLPKRLRKGLFWIKNKYPEKTLGERLRLALQELGPVWIKFGQMMSTRRDLFPPHLADQLALLQDQVAPFDGQLAKDQMEMELGGPLDNWFTDFDIKPLASASIAQVHTAKLKDSGREIVLKVIRPDIRPVIESDIRLMYRMARLVEQHIPEARRLKPVKVIEEYEKTLLDELDLRREASNAMQLRRNFEGSEELYVPEVILDLSSEHLMVSERIYGIQVSDIEQLERNGTNMKLLAERGVSVFFTQVFRDSFFHADMHPGNVFVNPDNPENPQWIGLDCGIVGTLNKEDKRYLAENLLGFFNSDYHKVAQLHVDSGWVPADTNVEEFEFAIRMVCEPIFAKPLGEISFGHVLLNLFNTARRFNMEVQPQLVLLQKTLLYVEGLGRQLYPQLDLWATAKPFLETWMAKQVGPAAFVTALSEKAPFWAEKLPELPDLVYDSLRQGKVLNQRMDKLYAGYRQSKRQQAKGQFLFNVGATLLICSAVLLTSNITVLASISAATGAAFWLFSWRAYRR.

The Protein kinase domain maps to 123–501 (DFDIKPLASA…KRQQAKGQFL (379 aa)). Residues 129–137 (LASASIAQV) and Lys-152 contribute to the ATP site. Asp-287 (proton acceptor) is an active-site residue. A helical membrane pass occupies residues 515–537 (LLTSNITVLASISAATGAAFWLF).

The protein belongs to the ABC1 family. UbiB subfamily.

It is found in the cell inner membrane. It functions in the pathway cofactor biosynthesis; ubiquinone biosynthesis [regulation]. In terms of biological role, is probably a protein kinase regulator of UbiI activity which is involved in aerobic coenzyme Q (ubiquinone) biosynthesis. The polypeptide is Probable protein kinase UbiB (Aliivibrio fischeri (strain ATCC 700601 / ES114) (Vibrio fischeri)).